The sequence spans 252 residues: Orotidine 5'-phosphate decarboxylase (252 aa).

Substrate is bound by residues Asp-24, Lys-46, 73-82 (DLKFHDIPNT), Thr-137, Arg-199, Gln-208, Gly-228, and Arg-229. Residue Lys-75 is the Proton donor of the active site.

The protein belongs to the OMP decarboxylase family. Type 1 subfamily. As to quaternary structure, homodimer.

It carries out the reaction orotidine 5'-phosphate + H(+) = UMP + CO2. It participates in pyrimidine metabolism; UMP biosynthesis via de novo pathway; UMP from orotate: step 2/2. Catalyzes the decarboxylation of orotidine 5'-monophosphate (OMP) to uridine 5'-monophosphate (UMP). This chain is Orotidine 5'-phosphate decarboxylase, found in Moorella thermoacetica (strain ATCC 39073 / JCM 9320).